The following is a 180-amino-acid chain: MIIYLHGFDSTSPGNHEKVLQLQFIDPDVRFINYSTLHPKHDMQHLLKEVHKAIEQSNDPEPIICGVGLGGYWSERIGFLCGIKQVIFNPNLHPENNMAGRIDRPEEYEDIATKCVEQFRMKNKGRCLVILSRDDEIHDNSKTAQALENYYEVVWDDKETHKFKKISQHLQKMKAFKENN.

It belongs to the UPF0227 family.

The protein is UPF0227 protein VV2369 of Vibrio vulnificus (strain YJ016).